The primary structure comprises 900 residues: Aldos-2-ulose dehydratase (900 aa).

The segment at 1–433 (MYSKVFLKPH…NPSINVFLST (433 aa)) is dehydratase domain. An ascopyrone M-binding site is contributed by Tyr-35. Mg(2+) contacts are provided by Asp-101, Thr-103, Asn-105, Phe-107, and Asp-109. Positions 116, 120, 155, 215, 295, and 337 each coordinate ascopyrone M. Catalysis depends on His-155, which acts as the Proton acceptor. Zn(2+)-binding residues include His-215, His-295, His-337, Asp-343, Asp-345, Asp-347, Glu-349, and Glu-351. 3 residues coordinate ascopyrone M: Tyr-414, Tyr-419, and Ala-627. The interval 434–739 (GILAERLDEE…EFPGFETFST (306 aa)) is isomerase domain. 1,5-anhydro-D-fructose contacts are provided by Ala-627 and His-630. Residues His-630, His-632, and Glu-639 each coordinate Zn(2+). Residues Glu-639 and His-641 each coordinate ascopyrone M. 1,5-anhydro-D-fructose is bound at residue His-641. His-709 serves as a coordination point for Zn(2+). Trp-726 serves as a coordination point for ascopyrone M. Trp-726 provides a ligand contact to 1,5-anhydro-D-fructose.

Homodimer. Requires Zn(2+) as cofactor.

The catalysed reaction is 1,5-anhydro-D-fructose = microthecin + H2O. It catalyses the reaction 1,5-anhydro-D-fructose = ascopyrone M + H2O. The enzyme catalyses ascopyrone M = microthecin. It carries out the reaction 2-dehydro-D-glucose = cortalcerone + H2O. The protein operates within carbohydrate metabolism; 1,5-anhydro-D-fructose degradation. A bifunctional enzyme which catalyzes the dehydration of anhydrofructose into ascopyrone M, and the isomerization of ascopyrone M into microthecin. To a lesser extent, can also act on 2-dehydro-D-glucopyranose (D-glucosone), leading to the antibiotic cortalcerone. The sequence is that of Aldos-2-ulose dehydratase from Phanerodontia chrysosporium (White-rot fungus).